The following is a 115-amino-acid chain: Regulator of ribonuclease activity B (115 aa).

It belongs to the RraB family. In terms of assembly, interacts with the C-terminal region of Rne.

Its subcellular location is the cytoplasm. Globally modulates RNA abundance by binding to RNase E (Rne) and regulating its endonucleolytic activity. Can modulate Rne action in a substrate-dependent manner by altering the composition of the degradosome. The chain is Regulator of ribonuclease activity B from Aeromonas hydrophila subsp. hydrophila (strain ATCC 7966 / DSM 30187 / BCRC 13018 / CCUG 14551 / JCM 1027 / KCTC 2358 / NCIMB 9240 / NCTC 8049).